The chain runs to 251 residues: Small ribosomal subunit protein uS3 (251 aa).

The 73-residue stretch at 39-111 (IRELINNFSK…DVDLNILEVK (73 aa)) folds into the KH type-2 domain.

It belongs to the universal ribosomal protein uS3 family. In terms of assembly, part of the 30S ribosomal subunit. Forms a tight complex with proteins S10 and S14.

In terms of biological role, binds the lower part of the 30S subunit head. Binds mRNA in the 70S ribosome, positioning it for translation. This chain is Small ribosomal subunit protein uS3, found in Phytoplasma sp. (strain STRAWB1).